The following is a 258-amino-acid chain: Chemokine-binding protein (258 aa).

A signal peptide spans 1 to 17 (MKQYIVLACMCLAAAAM). Residues 65 to 93 (TEITESESDPDPEVESEDDSTSVEDVDPP) are disordered. Residues 68-91 (TESESDPDPEVESEDDSTSVEDVD) show a composition bias toward acidic residues.

Belongs to the orthopoxvirus OPG001 family. In terms of assembly, binds to host CC chemokines, such as RANTES/CCL5, MIP-1alpha/CCL3, MCP-1/CCL2 and eotaxin.

Its subcellular location is the secreted. In terms of biological role, inhibits host immune defense by binding to host chemokines. Binds host CC chemokines (beta chemokines) such as RANTES with high affinity, but not CXC or C chemokines (alpha and gamma chemokines). The sequence is that of Chemokine-binding protein (OPG001) from Homo sapiens (Human).